The chain runs to 373 residues: Dual-specificity RNA methyltransferase RlmN (373 aa).

Glu-94 functions as the Proton acceptor in the catalytic mechanism. The Radical SAM core domain occupies Asp-100 to Asp-339. Cys-107 and Cys-344 are oxidised to a cystine. [4Fe-4S] cluster is bound by residues Cys-114, Cys-118, and Cys-121. Residues Gly-168–Glu-169, Ser-200, Ser-222–His-224, and Asn-301 contribute to the S-adenosyl-L-methionine site. Cys-344 (S-methylcysteine intermediate) is an active-site residue.

The protein belongs to the radical SAM superfamily. RlmN family. It depends on [4Fe-4S] cluster as a cofactor.

Its subcellular location is the cytoplasm. The catalysed reaction is adenosine(2503) in 23S rRNA + 2 reduced [2Fe-2S]-[ferredoxin] + 2 S-adenosyl-L-methionine = 2-methyladenosine(2503) in 23S rRNA + 5'-deoxyadenosine + L-methionine + 2 oxidized [2Fe-2S]-[ferredoxin] + S-adenosyl-L-homocysteine. It carries out the reaction adenosine(37) in tRNA + 2 reduced [2Fe-2S]-[ferredoxin] + 2 S-adenosyl-L-methionine = 2-methyladenosine(37) in tRNA + 5'-deoxyadenosine + L-methionine + 2 oxidized [2Fe-2S]-[ferredoxin] + S-adenosyl-L-homocysteine. In terms of biological role, specifically methylates position 2 of adenine 2503 in 23S rRNA and position 2 of adenine 37 in tRNAs. m2A2503 modification seems to play a crucial role in the proofreading step occurring at the peptidyl transferase center and thus would serve to optimize ribosomal fidelity. In Photobacterium profundum (strain SS9), this protein is Dual-specificity RNA methyltransferase RlmN.